The sequence spans 887 residues: Phosphatidylinositol 3-kinase catalytic subunit type 3 (887 aa).

The region spanning 35-184 (YKAVLEDPML…LAKLTKAHRQ (150 aa)) is the C2 PI3K-type domain. The segment at 150–170 (EADGSEPTKTPGRTSSTLSED) is disordered. The span at 156 to 170 (PTKTPGRTSSTLSED) shows a compositional bias: polar residues. Threonine 163 is modified (phosphothreonine; by AMPK). Phosphoserine; by AMPK is present on serine 165. 3 positions are modified to phosphoserine: serine 244, serine 261, and serine 282. The 239-residue stretch at 282 to 520 (SDHGLKPNAA…PKTHEMYLNV (239 aa)) folds into the PIK helical domain. 2 disordered regions span residues 416-435 (EPTKKESQGSVSESVSNSGI) and 446-468 (ITSPLPPVSSPPPASKTKESSDG). Residues 423–435 (QGSVSESVSNSGI) show a composition bias toward low complexity. The segment covering 449–459 (PLPPVSSPPPA) has biased composition (pro residues). In terms of domain architecture, PI3K/PI4K catalytic spans 605–871 (IPETATLFKS…LIDESVHALF (267 aa)). The interval 611 to 617 (LFKSALM) is G-loop. The tract at residues 740–748 (GVGDRHLDN) is catalytic loop. Residues 759–780 (HIDFGYILGRDPKPLPPPMKLN) are activation loop.

It belongs to the PI3/PI4-kinase family. As to quaternary structure, component of the PI3K (PI3KC3/PI3K-III/class III phosphatidylinositol 3-kinase) complex the core of which is composed of the catalytic subunit PIK3C3, the regulatory subunit PIK3R4 and BECN1 associating with additional regulatory/auxiliary subunits to form alternative complex forms. Alternative complex forms containing a fourth regulatory subunit in a mutually exclusive manner are: the PI3K complex I (PI3KC3-C1) containing ATG14, and the PI3K complex II (PI3KC3-C2) containing UVRAG. PI3KC3-C1 displays a V-shaped architecture with PIK3R4 serving as a bridge between PIK3C3 and the ATG14:BECN1 subcomplex. Both, PI3KC3-C1 and PI3KC3-C2, can associate with further regulatory subunits such as RUBCN, SH3GLB1/Bif-1 and AMBRA1. PI3KC3-C1 probably associates with PIK3CB. Interacts with RAB7A in the presence of PIK3R4. Interacts with AMBRA1. Interacts with BECN1P1/BECN2. Interacts with SLAMF1. May be a component of a complex composed of RAB5A (in GDP-bound form), DYN2 and PIK3C3. Interacts with NCKAP1L. Interacts with ATG14; this interaction is increased in the absence of TMEM39A. Interacts with STEEP1; the interaction is STING1-dependent and required for trafficking of STING1 from the endoplasmic reticulum. Interacts with YWHAG. Interacts with ARMC3. It depends on Mn(2+) as a cofactor. Post-translationally, ubiquitinated via 'Lys-29'- and 'Lys-48'-linked ubiquitination by UBE3C, promoting its degradation. Deubiquitination by ZRANB1/TRABID promotes its stabilization, leading to autophagosome maturation.

It localises to the midbody. The protein resides in the late endosome. Its subcellular location is the cytoplasmic vesicle. It is found in the autophagosome. It carries out the reaction a 1,2-diacyl-sn-glycero-3-phospho-(1D-myo-inositol) + ATP = a 1,2-diacyl-sn-glycero-3-phospho-(1D-myo-inositol-3-phosphate) + ADP + H(+). Functionally, catalytic subunit of the PI3K complex that mediates formation of phosphatidylinositol 3-phosphate; different complex forms are believed to play a role in multiple membrane trafficking pathways: PI3KC3-C1 is involved in initiation of autophagosomes and PI3KC3-C2 in maturation of autophagosomes and endocytosis. As part of PI3KC3-C1, promotes endoplasmic reticulum membrane curvature formation prior to vesicle budding. Involved in regulation of degradative endocytic trafficking and required for the abscission step in cytokinesis, probably in the context of PI3KC3-C2. Involved in the transport of lysosomal enzyme precursors to lysosomes. Required for transport from early to late endosomes. The protein is Phosphatidylinositol 3-kinase catalytic subunit type 3 of Sus scrofa (Pig).